Here is a 262-residue protein sequence, read N- to C-terminus: Snake venom serine protease (262 aa).

An N-terminal signal peptide occupies residues 1-18 (MVLIRVLANLLILQLSYA). Positions 19–24 (QKSSEL) are excised as a propeptide. In terms of domain architecture, Peptidase S1 spans 25–253 (VIGGDECNIN…YTEWIQSIIA (229 aa)). Intrachain disulfides connect Cys31–Cys167, Cys50–Cys66, Cys102–Cys260, Cys146–Cys214, Cys178–Cys193, and Cys204–Cys229. Residues His65 and Asp114 each act as charge relay system in the active site. N-linked (GlcNAc...) asparagine glycosylation is found at Asn125 and Asn158. Residue Ser208 is the Charge relay system of the active site.

Belongs to the peptidase S1 family. Snake venom subfamily. Monomer. As to expression, expressed by the venom gland.

It is found in the secreted. Its function is as follows. Snake venom serine protease that may act in the hemostasis system of the prey. The polypeptide is Snake venom serine protease (Crotalus durissus durissus (Central American rattlesnake)).